We begin with the raw amino-acid sequence, 240 residues long: Methylthioribulose-1-phosphate dehydratase (240 aa).

The span at Met1–Asn10 shows a compositional bias: basic and acidic residues. The interval Met1–Glu20 is disordered. Cys100 serves as a coordination point for substrate. Residues His117 and His119 each coordinate Zn(2+). Glu146 acts as the Proton donor/acceptor in catalysis. Residue His202 coordinates Zn(2+).

This sequence belongs to the aldolase class II family. MtnB subfamily. It depends on Zn(2+) as a cofactor.

The protein localises to the cytoplasm. The catalysed reaction is 5-(methylsulfanyl)-D-ribulose 1-phosphate = 5-methylsulfanyl-2,3-dioxopentyl phosphate + H2O. The protein operates within amino-acid biosynthesis; L-methionine biosynthesis via salvage pathway; L-methionine from S-methyl-5-thio-alpha-D-ribose 1-phosphate: step 2/6. Its function is as follows. Catalyzes the dehydration of methylthioribulose-1-phosphate (MTRu-1-P) into 2,3-diketo-5-methylthiopentyl-1-phosphate (DK-MTP-1-P). This Aspergillus fumigatus (strain CBS 144.89 / FGSC A1163 / CEA10) (Neosartorya fumigata) protein is Methylthioribulose-1-phosphate dehydratase.